The sequence spans 250 residues: Ribosomal RNA small subunit methyltransferase J (250 aa).

S-adenosyl-L-methionine is bound by residues 101-102 (RD), 117-118 (ER), 153-154 (SS), and aspartate 171.

It belongs to the methyltransferase superfamily. RsmJ family.

Its subcellular location is the cytoplasm. It catalyses the reaction guanosine(1516) in 16S rRNA + S-adenosyl-L-methionine = N(2)-methylguanosine(1516) in 16S rRNA + S-adenosyl-L-homocysteine + H(+). Its function is as follows. Specifically methylates the guanosine in position 1516 of 16S rRNA. The protein is Ribosomal RNA small subunit methyltransferase J of Escherichia coli (strain SMS-3-5 / SECEC).